A 94-amino-acid polypeptide reads, in one-letter code: MRTLTLLTALLLLALHTQAKSPQGTAEEAPDQEQLVMEDQDISISFGGDKGTALQDADVKAGVTCYCRSTRCGFRERLSGACGYRGRIYRLCCR.

A signal peptide spans 1-19 (MRTLTLLTALLLLALHTQA). The propeptide occupies 20–62 (KSPQGTAEEAPDQEQLVMEDQDISISFGGDKGTALQDADVKAG). Intrachain disulfides connect Cys-65/Cys-93, Cys-67/Cys-82, and Cys-72/Cys-92.

It belongs to the alpha-defensin family. As to expression, highest expression in bone marrow and to a much lesser extent in small intestine.

It is found in the secreted. Its function is as follows. Active in vitro against S.aureus, fungi, Gram-positive and Gram-negative bacteria and to a lesser extent against an enveloped virus. The sequence is that of Neutrophil antibiotic peptide NP-2 (Defa) from Rattus norvegicus (Rat).